The sequence spans 518 residues: Retinal dehydrogenase 2 (518 aa).

NAD(+) is bound by residues 184–186 (IPW), 210–213 (KPAE), and 264–266 (STE). The Proton acceptor role is filled by glutamate 286. The Nucleophile role is filled by cysteine 320. NAD(+)-binding positions include 366-370 (KQYNK) and glutamate 417.

It belongs to the aldehyde dehydrogenase family. In terms of assembly, homotetramer.

It is found in the cytoplasm. The catalysed reaction is retinal + NAD(+) + H2O = retinoate + NADH + 2 H(+). It catalyses the reaction all-trans-retinal + NAD(+) + H2O = all-trans-retinoate + NADH + 2 H(+). It carries out the reaction all-trans-13,14-dihydroretinal + NAD(+) + H2O = all-trans-13,14-dihydroretinoate + NADH + 2 H(+). It participates in cofactor metabolism; retinol metabolism. In terms of biological role, catalyzes the NAD-dependent oxidation of aldehyde substrates, such as all-trans-retinal and all-trans-13,14-dihydroretinal, to their corresponding carboxylic acids, all-trans-retinoate and all-trans-13,14-dihydroretinoate, respectively. Retinoate signaling is critical for the transcriptional control of many genes, for instance it is crucial for initiation of meiosis in both male and female. Recognizes retinal as substrate, both in its free form and when bound to cellular retinol-binding protein. Lacks activity with benzaldehyde, acetaldehyde and octanal. Displays complete lack of activity with citral. The chain is Retinal dehydrogenase 2 (ALDH1A2) from Gallus gallus (Chicken).